We begin with the raw amino-acid sequence, 128 residues long: Azurin (128 aa).

Residues 1-128 (AECKTTIDST…SMMKGTVTLK (128 aa)) enclose the Plastocyanin-like domain. A disulfide bridge connects residues cysteine 3 and cysteine 26. Residues histidine 46, cysteine 112, histidine 117, and methionine 121 each contribute to the Cu cation site.

The protein resides in the periplasm. In terms of biological role, transfers electrons from cytochrome c551 to cytochrome oxidase. The protein is Azurin of Pseudomonas fluorescens biotype B.